The following is a 723-amino-acid chain: Pescadillo homolog (723 aa).

The BRCT domain occupies 380 to 497; sequence EAGSLFATFT…KLLRPDLYAP (118 aa). Disordered regions lie at residues 440-471 and 501-723; these read RPQLPQASLPPLPKNPEDGTEAAPRPGTRVPG and LPPH…LNKK. Residues 522–551 are a coiled coil; sequence LADQEEEGEAERAAEAEEYENDEQEESGEE. Composition is skewed to acidic residues over residues 537-550, 588-600, and 608-622; these read AEEYENDEQEESGE, MAEDTDESSDDGD, and FDQDEDMSSESEDEE. Composition is skewed to basic and acidic residues over residues 623 to 634, 670 to 681, and 700 to 709; these read EKARSQHQKELE, KKKEEEELERQK, and KKQDAEAEKL. A coiled-coil region spans residues 656–723; that stretch reads KKQQAPLAKK…RKIEQGLNKK (68 aa). Over residues 710 to 723 the composition is skewed to basic residues; sequence RQKRRKIEQGLNKK.

It belongs to the pescadillo family. In terms of assembly, component of the NOP7 complex, composed of ERB1, NOP7 and YTM1. The complex is held together by ERB1, which interacts with NOP7 via its N-terminal domain and with YTM1 via a high-affinity interaction between the seven-bladed beta-propeller domains of the 2 proteins. The NOP7 complex associates with the 66S pre-ribosome.

The protein localises to the nucleus. It localises to the nucleolus. Its subcellular location is the nucleoplasm. In terms of biological role, component of the NOP7 complex, which is required for maturation of the 25S and 5.8S ribosomal RNAs and formation of the 60S ribosome. The chain is Pescadillo homolog from Ajellomyces capsulatus (strain NAm1 / WU24) (Darling's disease fungus).